The sequence spans 484 residues: tRNA sulfurtransferase (484 aa).

The THUMP domain occupies 63–167; it reads EAFAERLACI…NDNLYLIDKR (105 aa). ATP contacts are provided by residues 185 to 186, Lys267, Gly289, and Gln298; that span reads LI. The cysteines at positions 346 and 458 are disulfide-linked. The region spanning 406 to 484 is the Rhodanese domain; that stretch reads ISAGEIIIDV…GYNNVKVYRP (79 aa). Cys458 functions as the Cysteine persulfide intermediate in the catalytic mechanism.

It belongs to the ThiI family.

It is found in the cytoplasm. It catalyses the reaction [ThiI sulfur-carrier protein]-S-sulfanyl-L-cysteine + a uridine in tRNA + 2 reduced [2Fe-2S]-[ferredoxin] + ATP + H(+) = [ThiI sulfur-carrier protein]-L-cysteine + a 4-thiouridine in tRNA + 2 oxidized [2Fe-2S]-[ferredoxin] + AMP + diphosphate. It carries out the reaction [ThiS sulfur-carrier protein]-C-terminal Gly-Gly-AMP + S-sulfanyl-L-cysteinyl-[cysteine desulfurase] + AH2 = [ThiS sulfur-carrier protein]-C-terminal-Gly-aminoethanethioate + L-cysteinyl-[cysteine desulfurase] + A + AMP + 2 H(+). It functions in the pathway cofactor biosynthesis; thiamine diphosphate biosynthesis. In terms of biological role, catalyzes the ATP-dependent transfer of a sulfur to tRNA to produce 4-thiouridine in position 8 of tRNAs, which functions as a near-UV photosensor. Also catalyzes the transfer of sulfur to the sulfur carrier protein ThiS, forming ThiS-thiocarboxylate. This is a step in the synthesis of thiazole, in the thiamine biosynthesis pathway. The sulfur is donated as persulfide by IscS. The protein is tRNA sulfurtransferase of Shewanella pealeana (strain ATCC 700345 / ANG-SQ1).